We begin with the raw amino-acid sequence, 348 residues long: Protein DMR6-LIKE OXYGENASE 2 (348 aa).

The region spanning 194 to 294 is the Fe2OG dioxygenase domain; that stretch reads KHGQHMAINY…RISIPTFYCP (101 aa). Histidine 219, aspartate 221, and histidine 275 together coordinate Fe cation. 2-oxoglutarate is bound at residue arginine 285.

The protein belongs to the iron/ascorbate-dependent oxidoreductase family. Fe(2+) serves as cofactor.

The catalysed reaction is salicylate + NADH + O2 + H(+) = 2,3-dihydroxybenzoate + NAD(+) + H2O. Functionally, converts salicylic acid (SA) to 2,3-dihydroxybenzoic acid (2,3-DHBA). Negative regulator of defense against Hyaloperonospora arabidopsidis. Its function is as follows. (Microbial infection) Confers susceptibility to the downy mildew pathogen Hyaloperonospora arabidopsidis. The polypeptide is Protein DMR6-LIKE OXYGENASE 2 (Arabidopsis thaliana (Mouse-ear cress)).